Here is a 359-residue protein sequence, read N- to C-terminus: Phosphate acyltransferase (359 aa).

Belongs to the PlsX family. Homodimer. Probably interacts with PlsY.

It is found in the cytoplasm. The catalysed reaction is a fatty acyl-[ACP] + phosphate = an acyl phosphate + holo-[ACP]. It participates in lipid metabolism; phospholipid metabolism. Its function is as follows. Catalyzes the reversible formation of acyl-phosphate (acyl-PO(4)) from acyl-[acyl-carrier-protein] (acyl-ACP). This enzyme utilizes acyl-ACP as fatty acyl donor, but not acyl-CoA. This chain is Phosphate acyltransferase, found in Salmonella heidelberg (strain SL476).